Here is a 374-residue protein sequence, read N- to C-terminus: Queuine tRNA-ribosyltransferase (374 aa).

Residue Asp89 is the Proton acceptor of the active site. Substrate-binding positions include Asp89–Phe93, Asp143, Gln187, and Gly214. Positions Gly245 to Asp251 are RNA binding. Residue Asp264 is the Nucleophile of the active site. The segment at Thr269–Arg273 is RNA binding; important for wobble base 34 recognition. Residues Cys302, Cys304, Cys307, and His333 each contribute to the Zn(2+) site.

This sequence belongs to the queuine tRNA-ribosyltransferase family. Homodimer. Within each dimer, one monomer is responsible for RNA recognition and catalysis, while the other monomer binds to the replacement base PreQ1. Zn(2+) is required as a cofactor.

The catalysed reaction is 7-aminomethyl-7-carbaguanine + guanosine(34) in tRNA = 7-aminomethyl-7-carbaguanosine(34) in tRNA + guanine. It participates in tRNA modification; tRNA-queuosine biosynthesis. Its function is as follows. Catalyzes the base-exchange of a guanine (G) residue with the queuine precursor 7-aminomethyl-7-deazaguanine (PreQ1) at position 34 (anticodon wobble position) in tRNAs with GU(N) anticodons (tRNA-Asp, -Asn, -His and -Tyr). Catalysis occurs through a double-displacement mechanism. The nucleophile active site attacks the C1' of nucleotide 34 to detach the guanine base from the RNA, forming a covalent enzyme-RNA intermediate. The proton acceptor active site deprotonates the incoming PreQ1, allowing a nucleophilic attack on the C1' of the ribose to form the product. After dissociation, two additional enzymatic reactions on the tRNA convert PreQ1 to queuine (Q), resulting in the hypermodified nucleoside queuosine (7-(((4,5-cis-dihydroxy-2-cyclopenten-1-yl)amino)methyl)-7-deazaguanosine). This is Queuine tRNA-ribosyltransferase from Shewanella loihica (strain ATCC BAA-1088 / PV-4).